The chain runs to 373 residues: Glutamate 5-kinase (373 aa).

K16 contacts ATP. The substrate site is built by S56, D143, and N155. Position 175–176 (175–176 (TD)) interacts with ATP. In terms of domain architecture, PUA spans 281–359 (RGVVTLDDGA…TKIETLLGYK (79 aa)).

This sequence belongs to the glutamate 5-kinase family.

It is found in the cytoplasm. The enzyme catalyses L-glutamate + ATP = L-glutamyl 5-phosphate + ADP. It functions in the pathway amino-acid biosynthesis; L-proline biosynthesis; L-glutamate 5-semialdehyde from L-glutamate: step 1/2. Catalyzes the transfer of a phosphate group to glutamate to form L-glutamate 5-phosphate. This is Glutamate 5-kinase from Teredinibacter turnerae (strain ATCC 39867 / T7901).